A 162-amino-acid chain; its full sequence is NADH-quinone oxidoreductase subunit I 2 (162 aa).

4Fe-4S ferredoxin-type domains follow at residues 52-82 and 93-122; these read LRRYPNGEERCIACKLCEAICPAQAITIEAG and VRYDIDMVKCIYCGLCQEACPVDAIVEGPN. The [4Fe-4S] cluster site is built by Cys62, Cys65, Cys68, Cys72, Cys102, Cys105, Cys108, and Cys112.

Belongs to the complex I 23 kDa subunit family. In terms of assembly, NDH-1 is composed of 14 different subunits. Subunits NuoA, H, J, K, L, M, N constitute the membrane sector of the complex. The cofactor is [4Fe-4S] cluster.

Its subcellular location is the cell inner membrane. The enzyme catalyses a quinone + NADH + 5 H(+)(in) = a quinol + NAD(+) + 4 H(+)(out). In terms of biological role, NDH-1 shuttles electrons from NADH, via FMN and iron-sulfur (Fe-S) centers, to quinones in the respiratory chain. The immediate electron acceptor for the enzyme in this species is believed to be ubiquinone. Couples the redox reaction to proton translocation (for every two electrons transferred, four hydrogen ions are translocated across the cytoplasmic membrane), and thus conserves the redox energy in a proton gradient. In Rhodopseudomonas palustris (strain BisB5), this protein is NADH-quinone oxidoreductase subunit I 2.